Reading from the N-terminus, the 254-residue chain is Hemin import ATP-binding protein HmuV (254 aa).

Residues 2–239 (LNINQVNINL…DTLSQVWHYD (238 aa)) enclose the ABC transporter domain. 34-41 (GPNGAGKS) lines the ATP pocket.

This sequence belongs to the ABC transporter superfamily. Heme (hemin) importer (TC 3.A.1.14.5) family. The complex is composed of two ATP-binding proteins (HmuV), two transmembrane proteins (HmuU) and a solute-binding protein (HmuT).

Its subcellular location is the cell inner membrane. Its function is as follows. Part of the ABC transporter complex HmuTUV involved in hemin import. Responsible for energy coupling to the transport system. The polypeptide is Hemin import ATP-binding protein HmuV (Shewanella denitrificans (strain OS217 / ATCC BAA-1090 / DSM 15013)).